The sequence spans 125 residues: UPF0538 protein C2C4.04c (125 aa).

This sequence belongs to the UPF0538 family.

The polypeptide is UPF0538 protein C2C4.04c (Schizosaccharomyces pombe (strain 972 / ATCC 24843) (Fission yeast)).